Consider the following 300-residue polypeptide: F-box/LRR-repeat protein 15 (300 aa).

Met-1 bears the N-acetylmethionine mark. An F-box domain is found at 19–66; it reads LLDLPWEDVLLPHVLNWVPLRQLLRLQRVSRAFRALVQLHLARLRRFD. The tract at residues 113–269 is interaction with SMURF1; that stretch reads NPQLRSVALA…EPSLSRLRKR (157 aa). LRR repeat units follow at residues 141–162, 167–188, 194–215, 220–241, and 246–267; these read RLQR…RGLA, ALEE…VYLA, GLRS…QELA, QLEH…RTLA, and ALRS…SRLR.

The protein belongs to the FBXL15 family. Part of the SCF (SKP1-CUL1-F-box) E3 ubiquitin-protein ligase complex SCF(FBXL15) composed of CUL1, SKP1, RBX1 and FBXL15. In terms of tissue distribution, expressed in heart, liver, spleen, bone, muscle, brain and kidney (at protein level).

The protein resides in the cytoplasm. The protein operates within protein modification; protein ubiquitination. In terms of biological role, substrate recognition component of a SCF (SKP1-CUL1-F-box protein) E3 ubiquitin-protein ligase complex which mediates the ubiquitination and subsequent proteasomal degradation of SMURF1, thereby acting as a positive regulator of the BMP signaling pathway. Required for dorsal/ventral pattern formation and bone mass maintenance. Also mediates ubiquitination of SMURF2 and WWP2. In Mus musculus (Mouse), this protein is F-box/LRR-repeat protein 15 (Fbxl15).